The chain runs to 119 residues: Fluoride-specific ion channel FluC 2 (119 aa).

A helical membrane pass occupies residues 46–66 (FALGLLTFAGVTGDAALLVGV). Residues G70 and T73 each coordinate Na(+). Residues 96-116 (LNAVGNLACALVGIGLAWGIV) form a helical membrane-spanning segment.

This sequence belongs to the fluoride channel Fluc/FEX (TC 1.A.43) family.

The protein resides in the cell membrane. It carries out the reaction fluoride(in) = fluoride(out). Na(+) is not transported, but it plays an essential structural role and its presence is essential for fluoride channel function. In terms of biological role, fluoride-specific ion channel. Important for reducing fluoride concentration in the cell, thus reducing its toxicity. The polypeptide is Fluoride-specific ion channel FluC 2 (Haloarcula marismortui (strain ATCC 43049 / DSM 3752 / JCM 8966 / VKM B-1809) (Halobacterium marismortui)).